A 201-amino-acid polypeptide reads, in one-letter code: Peptidyl-prolyl cis-trans isomerase CYP19-4 (201 aa).

Residues 1–23 (MAKASFILLGTLFLFGAIASIQA) form the signal peptide. The region spanning 35–198 (YFDVEIDGKS…SKVVIADSGE (164 aa)) is the PPIase cyclophilin-type domain.

This sequence belongs to the cyclophilin-type PPIase family. Interacts with EMB30/GNOM. As to expression, ubiquitous, mostly in aerial organs (at protein level).

It localises to the cytoplasm. The protein resides in the membrane. It is found in the endoplasmic reticulum. The protein localises to the secreted. The enzyme catalyses [protein]-peptidylproline (omega=180) = [protein]-peptidylproline (omega=0). Binds cyclosporin A (CsA). CsA mediates some of its effects via an inhibitory action on PPIase. Functionally, PPIases accelerate the folding of proteins. It catalyzes the cis-trans isomerization of proline imidic peptide bonds in oligopeptides. May be involved during embryogenesis and organ development by regulating the folding of EMB30/GNOM, and thus, by modulating its activity. This Arabidopsis thaliana (Mouse-ear cress) protein is Peptidyl-prolyl cis-trans isomerase CYP19-4 (CYP19-4).